A 24-amino-acid chain; its full sequence is Cytochrome c oxidase subunit 7A2, mitochondrial (24 aa).

The segment covering 1 to 13 (FENKVPEKQKLFQ) has biased composition (basic and acidic residues). The interval 1–24 (FENKVPEKQKLFQEDNGIPVHLKG) is disordered. Lys-10 is modified (N6-acetyllysine).

This sequence belongs to the cytochrome c oxidase VIIa family. Component of the cytochrome c oxidase (complex IV, CIV), a multisubunit enzyme composed of 14 subunits. The complex is composed of a catalytic core of 3 subunits MT-CO1, MT-CO2 and MT-CO3, encoded in the mitochondrial DNA, and 11 supernumerary subunits COX4I, COX5A, COX5B, COX6A, COX6B, COX6C, COX7A, COX7B, COX7C, COX8 and NDUFA4, which are encoded in the nuclear genome. The complex exists as a monomer or a dimer and forms supercomplexes (SCs) in the inner mitochondrial membrane with NADH-ubiquinone oxidoreductase (complex I, CI) and ubiquinol-cytochrome c oxidoreductase (cytochrome b-c1 complex, complex III, CIII), resulting in different assemblies (supercomplex SCI(1)III(2)IV(1) and megacomplex MCI(2)III(2)IV(2)). Interacts with PET100.

Its subcellular location is the mitochondrion inner membrane. It functions in the pathway energy metabolism; oxidative phosphorylation. Its function is as follows. Component of the cytochrome c oxidase, the last enzyme in the mitochondrial electron transport chain which drives oxidative phosphorylation. The respiratory chain contains 3 multisubunit complexes succinate dehydrogenase (complex II, CII), ubiquinol-cytochrome c oxidoreductase (cytochrome b-c1 complex, complex III, CIII) and cytochrome c oxidase (complex IV, CIV), that cooperate to transfer electrons derived from NADH and succinate to molecular oxygen, creating an electrochemical gradient over the inner membrane that drives transmembrane transport and the ATP synthase. Cytochrome c oxidase is the component of the respiratory chain that catalyzes the reduction of oxygen to water. Electrons originating from reduced cytochrome c in the intermembrane space (IMS) are transferred via the dinuclear copper A center (CU(A)) of subunit 2 and heme A of subunit 1 to the active site in subunit 1, a binuclear center (BNC) formed by heme A3 and copper B (CU(B)). The BNC reduces molecular oxygen to 2 water molecules using 4 electrons from cytochrome c in the IMS and 4 protons from the mitochondrial matrix. The chain is Cytochrome c oxidase subunit 7A2, mitochondrial (COX7A2) from Ovis aries (Sheep).